The primary structure comprises 511 residues: Inositol-3-phosphate synthase isozyme 1 (511 aa).

Residues Gly-71, Gly-72, Asn-73, Asn-74, Asp-144, Ile-181, Gln-191, Arg-194, Thr-231, Ala-232, Asn-233, Thr-234, Gly-282, Ser-283, Asp-307, Ser-310, Asn-341, Asn-342, Asp-343, Lys-356, Ala-394, Asp-395, Asp-423, and Ser-424 each coordinate NAD(+).

This sequence belongs to the myo-inositol 1-phosphate synthase family. Homotrimer or homotetramer. Interacts with ATXR5 and ATXR6. Requires NAD(+) as cofactor. Expressed in siliques, leaves, roots, seed endosperm, but not in embryos. Highest expression in leaves, but restricted to vascular tissue in older leaves.

The protein resides in the cytoplasm. It is found in the cytosol. The protein localises to the nucleus. The catalysed reaction is D-glucose 6-phosphate = 1D-myo-inositol 3-phosphate. Its pathway is polyol metabolism; myo-inositol biosynthesis; myo-inositol from D-glucose 6-phosphate: step 1/2. Its function is as follows. Key enzyme in myo-inositol biosynthesis pathway that catalyzes the conversion of glucose 6-phosphate to 1-myo-inositol 1-phosphate in a NAD-dependent manner. Catalyzes the majority of myo-inositol synthesis required for plant growth and development. Acts as a repressor of programmed cell death and protects plant cells against cell death under high light intensity or long days. Controls its own transcription by inhibiting ATXR6 activity. Reduces the deposition of inhibitory histone marks on its own promoter. In Arabidopsis thaliana (Mouse-ear cress), this protein is Inositol-3-phosphate synthase isozyme 1 (IPS1).